Consider the following 427-residue polypeptide: cAMP-dependent protein kinase regulatory subunit (427 aa).

The dimerization and phosphorylation stretch occupies residues 38–184 (QFCSNFFIRK…RIKVSISNNF (147 aa)). Positions 96 to 145 (TTHMGHPNDHGALHDDDDDPLEDEDDEEFDKFSTEPLPSLPPTNYNRGRR) are disordered. Acidic residues predominate over residues 110-124 (DDDDDPLEDEDDEEF). Residue S147 is modified to Phosphoserine. 3',5'-cyclic AMP is bound by residues 185–300 (LFRN…FLSE), E250, R259, 303–422 (LLKS…YHAV), E372, and R381.

The protein belongs to the cAMP-dependent kinase regulatory chain family. In terms of assembly, tetramer, composed of 2 regulatory (R) and 2 catalytic (C) subunits. In the presence of cAMP it dissociates into 2 active monomeric C subunits and an R dimer.

This is cAMP-dependent protein kinase regulatory subunit (pkar) from Mucor circinelloides f. lusitanicus (Mucor racemosus var. lusitanicus).